A 172-amino-acid polypeptide reads, in one-letter code: uncharacterized protein (172 aa).

The Ferritin-like diiron domain occupies 1-148 (MANSQKVIDV…TIHDFFENGN (148 aa)).

This is an uncharacterized protein from Ureaplasma urealyticum (Ureaplasma urealyticum biotype 2).